The chain runs to 592 residues: Probable 6-phosphofructo-2-kinase C222.13c (592 aa).

Residues 1-80 (MSNTGSARTE…PANDVEKMEV (80 aa)) form a disordered region. Residues 57–66 (SIFKREELTP) are compositionally biased toward basic and acidic residues. Position 150 to 157 (150 to 157 (GIPATGKS)) interacts with ATP. Active-site residues include Asp-235 and Cys-266. Residue Arg-300 coordinates beta-D-fructose 6-phosphate. The active-site Proton donor is the His-527.

It is found in the cytoplasm. It localises to the nucleus. It catalyses the reaction beta-D-fructose 6-phosphate + ATP = beta-D-fructose 2,6-bisphosphate + ADP + H(+). Its function is as follows. Synthesis of fructose 2,6-bisphosphate. This chain is Probable 6-phosphofructo-2-kinase C222.13c, found in Schizosaccharomyces pombe (strain 972 / ATCC 24843) (Fission yeast).